The primary structure comprises 1130 residues: MPLRSSQSSPPASQSFKRKQPTISSFFTKKPPTSQEKAQEPEDEPAASRRQFANALDKATRVKEHGAPAERDEEQEEEEEDIVAPAPKRIKTNGVHEKEPASAAKEVSSASRPAPPLASSQRTELYKFASSPADGAGAGVDRPEDPETKQRQAERERLHQLFVKKLGGADCAVGIGRSAGGDAPSGAEEAAEGDEDEEVAPAPAAKGRGSKKAGGGKLTPLEKQVIEIKRKHMDTVLVIEVGYKYRFFGEDARIAAKELSIVCIPGKMRFDEHPSEAHLDRFASASIPVHRLHVHVKRLVAAGYKVGVVRQLETAALKAAGDNRNAPFSRKLTNLYTKGTYVDDVEGLEGPTPAASGGASPATGYLLCITETNAKGWGNDERVHVGIVAVQPNTGDIIYDDFEDGFMRSEVETRLLHIAPCELVIVGELSKATEKLVQHLSGSKLNTFGDKVRVERVGKKKTAVAESHSHVANFYASKLKAASVDDTQTSNLLQKVLTLPEQVTVCLSAMIEHMTEYGLEHIFQLTKYFQHFSSRSHMLLNANTLVSLEIYQNQTDHSTKGSLFWTLDRTQTRFGQRLLRKWVGRPLLDKSRLEERVNAVEELKNPEKTVQVERLKRLLGRIKSDLEKNLIRIYYGKCTRPELLTVLQTLQTIAQEYADVKSPEDNGFASPVLGEAVASLPTILKDVVAFLNKINMHAARSDDKYEFFRESEETDEISEHKLGIASVEHELEEHRAVAAGILKWPKVVYVTSSGIEYLIEVENTSNAIKRVPASWVKVSGTKKLSRFHTPEVIQLLRQRDQHKEALAAACDKAFAALLAEIAVNYQLFRDCVQALATLDCLLSLAAIASQPGYVKPEYTDHTCICVEQGRHPMVEQLLLDSYVPNDTDLDTDQTRALLVTGPNMGGKSSYVRQVALIAIMGQIGSYVPARSAKLGMLDAVFTRMGAFDNMLAGESTFMVELSETADILKQATPRSLVILDELGRGTSTHDGVAIAQAVLDYMVRTIRSLTLFITHYQHLSNMTQSFPDHELRNVHMRFTESGAGQDEEITFLYEVGEGVAHRSYGLNVARLANLPAPLLDVAKLKSAELEEQIRRRRLARLLTAVGEVMSDPAKGDEDFLERLMSTAEQL.

The segment covering 1-15 (MPLRSSQSSPPASQS) has biased composition (low complexity). 2 disordered regions span residues 1–153 (MPLR…QRQA) and 177–217 (RSAG…GGGK). Residues 21–36 (PTISSFFTKKPPTSQE) show a composition bias toward polar residues. A compositionally biased stretch (basic and acidic residues) spans 58–70 (KATRVKEHGAPAE). Acidic residues predominate over residues 71 to 82 (RDEEQEEEEEDI). The span at 108–120 (SSASRPAPPLASS) shows a compositional bias: low complexity. The span at 141–153 (DRPEDPETKQRQA) shows a compositional bias: basic and acidic residues. Positions 189–199 (EAAEGDEDEEV) are enriched in acidic residues. Residues 212–339 (KAGGGKLTPL…RKLTNLYTKG (128 aa)) are mispair-binding domain. Residue 901–908 (GPNMGGKS) participates in ATP binding.

The protein belongs to the DNA mismatch repair MutS family. MSH3 subfamily. Heterodimer consisting of msh2-msh3 (MutS beta). Forms a ternary complex with MutL alpha (mlh1-pms1).

It localises to the nucleus. In terms of biological role, component of the post-replicative DNA mismatch repair system (MMR). Heterodimerizes with msh2 to form MutS beta, which binds to DNA mismatches thereby initiating DNA repair. Msh3 provides substrate-binding and substrate specificity to the complex. When bound, the MutS beta heterodimer bends the DNA helix and shields approximately 20 base pairs. Acts mainly to repair insertion-deletion loops (IDLs) from 2 to 13 nucleotides in size, but can also repair base-base and single insertion-deletion mismatches that occur during replication. After mismatch binding, forms a ternary complex with the MutL alpha heterodimer, which is thought to be responsible for directing the downstream MMR events, including strand discrimination, excision, and resynthesis. ATP binding and hydrolysis play a pivotal role in mismatch repair functions. In Aspergillus clavatus (strain ATCC 1007 / CBS 513.65 / DSM 816 / NCTC 3887 / NRRL 1 / QM 1276 / 107), this protein is DNA mismatch repair protein msh3 (msh3).